Reading from the N-terminus, the 430-residue chain is Bone morphogenetic protein 7 (430 aa).

The N-terminal stretch at 1–29 (MHVRSLRAAAPHSFVALWAPLFLLRSALA) is a signal peptide. Residues 30–291 (DFSLDNEVHS…ATEVHLRSIR (262 aa)) constitute a propeptide that is removed on maturation. N-linked (GlcNAc...) asparagine glycans are attached at residues Asn-186, Asn-301, Asn-320, and Asn-371. Residues 290–310 (IRSTGGKQRSQNRSKTPKNQE) form a disordered region. 3 cysteine pairs are disulfide-bonded: Cys-329-Cys-395, Cys-358-Cys-427, and Cys-362-Cys-429.

The protein belongs to the TGF-beta family. In terms of assembly, homodimer; disulfide-linked. Interacts with SOSTDC1. Interacts with TWSG1. Interacts with FBN1 (via N-terminal domain) and FBN2. Interacts with type I receptor ACVR1. Interacts with type II receptor ACVR2A. Interacts with NOG; this interaction inhibits canonical BMP signaling. Interacts with SCUBE3. Interacts with ERFE; the interaction inhibits BMP-induced transcription of HAMP. Interacts with TGFBR3.

Its subcellular location is the secreted. Growth factor of the TGF-beta superfamily that plays important role in various biological processes, including embryogenesis, hematopoiesis, neurogenesis and skeletal morphogenesis. Initiates the canonical BMP signaling cascade by associating with type I receptor ACVR1 and type II receptor ACVR2A. Once all three components are bound together in a complex at the cell surface, ACVR2A phosphorylates and activates ACVR1. In turn, ACVR1 propagates signal by phosphorylating SMAD1/5/8 that travel to the nucleus and act as activators and repressors of transcription of target genes. For specific functions such as growth cone collapse in developing spinal neurons and chemotaxis of monocytes, also uses BMPR2 as type II receptor. Can also signal through non-canonical pathways such as P38 MAP kinase signaling cascade that promotes brown adipocyte differentiation through activation of target genes, including members of the SOX family of transcription factors. Promotes the expression of HAMP, this is repressed by its interaction with ERFE. In Mus musculus (Mouse), this protein is Bone morphogenetic protein 7 (Bmp7).